An 815-amino-acid chain; its full sequence is Cell division cycle protein 48 (815 aa).

A disordered region spans residues 1-30 (MNAPSTMTDKKPEVEHLQGENPPKDTYSAE). The segment covering 8-18 (TDKKPEVEHLQ) has biased composition (basic and acidic residues). Residues 267–273 (PGTGKTL), Asn-368, His-404, and 541–546 (GTGKTL) contribute to the ATP site. The tract at residues 794-815 (DSADSNTNGPSFGNDGADDLYA) is disordered. A compositionally biased stretch (polar residues) spans 795–804 (SADSNTNGPS).

Belongs to the AAA ATPase family. As to quaternary structure, component of the ribosome quality control complex (RQC), composed of the E3 ubiquitin ligase rkr1/ltn1, rqc1 and mtr1/rqc2, as well as cdc48 and its ubiquitin-binding cofactors. RQC forms a stable complex with 60S ribosomal subunits. Interacts with ubx2 and ubx3. Interacts with lub1. Interacts with rbd2 (via C-terminal SHP box); the interaction is required for rbd2-mediated cleavage of sre1 and sre2.

It is found in the cytoplasm. Its subcellular location is the nucleus. It catalyses the reaction ATP + H2O = ADP + phosphate + H(+). Its activity is regulated as follows. The first ATP-binding region has low ATPase activity. The second ATP-binding region is responsible for ATPase activity. ATP binding to the first ATP-binding region induces intrinsic activity of the second ATP-binding region. While ATP binding to the first ATP-binding region appears to prevent ATP hydrolysis by the second ATP-binding region, ADP-binding to first region promotes the coordinate and cooperative ATPase cycle of the second ATP-binding region. ATP binding to the first ATP-binding region induces a conformational change, promoting the rotation of the first ATP-binding region relative to the second ATP-binding region in the hexamer. Functionally, ATP-dependent chaperone which probably uses the energy provided by ATP hydrolysis to generate mechanical force to unfold substrate proteins, disassemble protein complexes, and disaggregate protein aggregates. By recruiting and promoting the degradation of ubiquitinated proteins, plays a role in the ubiquitin fusion degradation (UFD) pathway. Has a role in the endoplasmic reticulum-associated degradation (ERAD) pathway which mediates the cytoplasmic elimination of misfolded proteins exported from the ER. Involved in spindle disassembly. Component of the ribosome quality control complex (RQC), a ribosome-associated complex that mediates ubiquitination and extraction of incompletely synthesized nascent chains for proteasomal degradation. CDC48 may provide the mechanical force that dislodges the polyubiquitinated nascent peptides from the exit channel. Required for ribophagy, a process which relocalizes ribosomal particles into the vacuole for degradation in response to starvation. Has a role in substrate recognition mediating rbd2-dependent cleavage of sterol regulatory element-binding protein sre1 and sre2. In Schizosaccharomyces pombe (strain 972 / ATCC 24843) (Fission yeast), this protein is Cell division cycle protein 48.